The primary structure comprises 184 residues: Ras-related protein Rap1 (184 aa).

10–17 is a GTP binding site; the sequence is GSGGVGKS. Residues 32–40 carry the Effector region motif; the sequence is YDPTIEDSY. Residues 57 to 61 and 116 to 119 each bind GTP; these read DTAGT and NKCD. The residue at position 181 (C181) is a Cysteine methyl ester. C181 is lipidated: S-geranylgeranyl cysteine. Residues 182-184 constitute a propeptide, removed in mature form; sequence VLL.

The protein belongs to the small GTPase superfamily. Ras family.

The protein localises to the cell membrane. It carries out the reaction GTP + H2O = GDP + phosphate + H(+). Alternates between an inactive form bound to GDP and an active form bound to GTP. Activated by a guanine nucleotide-exchange factor (GEF) and inactivated by a GTPase-activating protein (GAP). Ras proteins bind GDP/GTP and possess intrinsic GTPase activity. Plays a role in photoreceptor cell determination. The sequence is that of Ras-related protein Rap1 from Drosophila melanogaster (Fruit fly).